The primary structure comprises 270 residues: MISKINFVKMHGLGNDFVIVNKRDLSSSYDLSQLAKNMAERHTGIGCDQFIIYEEHNDFYEMIIYNIDGSSAKLCGNATRCLAKLIYLDTGKQDITVMVGNKKLLCNVNDENNISVNVGSVSFNEAWMPSRDKVWEFAERYMIDLKETICVDIGNPHVVIFSKLEPQDQKIVGERLQAKELFADGVNVNFAEVKDNKIYLSVWERGAGLTLACGSGACGSFAAGLKRGFIHSPSTIVFKHGNLTMKEENGNIIMQGAATLVARGEYYCEQ.

Substrate is bound by residues asparagine 15, glutamine 49, and asparagine 66. The Proton donor role is filled by cysteine 75. Substrate contacts are provided by residues 76–77 (GN), asparagine 155, asparagine 187, and 204–205 (ER). The Proton acceptor role is filled by cysteine 213. 214–215 (GS) contacts substrate.

This sequence belongs to the diaminopimelate epimerase family. In terms of assembly, homodimer.

The protein localises to the cytoplasm. It carries out the reaction (2S,6S)-2,6-diaminopimelate = meso-2,6-diaminopimelate. Its pathway is amino-acid biosynthesis; L-lysine biosynthesis via DAP pathway; DL-2,6-diaminopimelate from LL-2,6-diaminopimelate: step 1/1. Catalyzes the stereoinversion of LL-2,6-diaminopimelate (L,L-DAP) to meso-diaminopimelate (meso-DAP), a precursor of L-lysine and an essential component of the bacterial peptidoglycan. The chain is Diaminopimelate epimerase from Rickettsia conorii (strain ATCC VR-613 / Malish 7).